Here is a 366-residue protein sequence, read N- to C-terminus: Tetraacyldisaccharide 4'-kinase (366 aa).

62 to 69 contacts ATP; it reads RVGGTGKT.

Belongs to the LpxK family.

The enzyme catalyses a lipid A disaccharide + ATP = a lipid IVA + ADP + H(+). It functions in the pathway glycolipid biosynthesis; lipid IV(A) biosynthesis; lipid IV(A) from (3R)-3-hydroxytetradecanoyl-[acyl-carrier-protein] and UDP-N-acetyl-alpha-D-glucosamine: step 6/6. Transfers the gamma-phosphate of ATP to the 4'-position of a tetraacyldisaccharide 1-phosphate intermediate (termed DS-1-P) to form tetraacyldisaccharide 1,4'-bis-phosphate (lipid IVA). This chain is Tetraacyldisaccharide 4'-kinase, found in Polynucleobacter necessarius subsp. necessarius (strain STIR1).